The primary structure comprises 474 residues: tRNA-2-methylthio-N(6)-dimethylallyladenosine synthase (474 aa).

An MTTase N-terminal domain is found at 3–120; sequence KKLLIKTWGC…LPEMIKQSQS (118 aa). 6 residues coordinate [4Fe-4S] cluster: Cys-12, Cys-49, Cys-83, Cys-157, Cys-161, and Cys-164. The 233-residue stretch at 143 to 375 folds into the Radical SAM core domain; it reads RAEGATAFVS…QQTVNTQAMR (233 aa). The TRAM domain maps to 378–441; the sequence is RQMLDTEQRV…ANSLRGELVR (64 aa).

Belongs to the methylthiotransferase family. MiaB subfamily. In terms of assembly, monomer. [4Fe-4S] cluster is required as a cofactor.

The protein resides in the cytoplasm. It carries out the reaction N(6)-dimethylallyladenosine(37) in tRNA + (sulfur carrier)-SH + AH2 + 2 S-adenosyl-L-methionine = 2-methylsulfanyl-N(6)-dimethylallyladenosine(37) in tRNA + (sulfur carrier)-H + 5'-deoxyadenosine + L-methionine + A + S-adenosyl-L-homocysteine + 2 H(+). In terms of biological role, catalyzes the methylthiolation of N6-(dimethylallyl)adenosine (i(6)A), leading to the formation of 2-methylthio-N6-(dimethylallyl)adenosine (ms(2)i(6)A) at position 37 in tRNAs that read codons beginning with uridine. The chain is tRNA-2-methylthio-N(6)-dimethylallyladenosine synthase from Vibrio campbellii (strain ATCC BAA-1116).